The following is a 381-amino-acid chain: Cobalt-precorrin-5B C(1)-methyltransferase (381 aa).

The protein belongs to the CbiD family.

It carries out the reaction Co-precorrin-5B + S-adenosyl-L-methionine = Co-precorrin-6A + S-adenosyl-L-homocysteine. The protein operates within cofactor biosynthesis; adenosylcobalamin biosynthesis; cob(II)yrinate a,c-diamide from sirohydrochlorin (anaerobic route): step 6/10. Functionally, catalyzes the methylation of C-1 in cobalt-precorrin-5B to form cobalt-precorrin-6A. The sequence is that of Cobalt-precorrin-5B C(1)-methyltransferase from Methylococcus capsulatus (strain ATCC 33009 / NCIMB 11132 / Bath).